Reading from the N-terminus, the 537-residue chain is Zinc finger protein 703 (537 aa).

Disordered regions lie at residues 1-38, 90-254, and 300-323; these read MNCSPPGSSTDTERQSSSSGTPVAPRPTLAPTHPLRQA, SQIG…VAPV, and VGNQLPGTLGLPGKPPSSSPLTGA. Residues 101 to 111 show a composition bias toward polar residues; sequence SKLNSVTSSGL. A compositionally biased stretch (low complexity) spans 149–158; sequence GSSSGGAADK. Polar residues predominate over residues 176 to 185; the sequence is SPSSRVSSPG. Positions 188–203 are enriched in basic and acidic residues; the sequence is CDSKNNESQEKKEPEA. The segment covering 205–220 has biased composition (polar residues); sequence KANSETSQVNPTLTRA. Low complexity predominate over residues 221–232; that stretch reads STSNSSAESSQS. Residues 409–437 form a C2H2-type zinc finger; sequence HICNWVSASGPCDKRFSTSEELLAHLRTH.

It belongs to the Elbow/Noc family.

The protein localises to the nucleus. Its subcellular location is the cytoplasm. Its function is as follows. Transcriptional corepressor which does not bind directly to DNA and may regulate transcription through recruitment of histone deacetylases to gene promoters. Regulates cell adhesion, migration and proliferation. Involved in specification of the lateral neural plate border (NPB). May be required for segmental gene expression during hindbrain development. In Xenopus tropicalis (Western clawed frog), this protein is Zinc finger protein 703 (znf703).